Consider the following 440-residue polypeptide: ATP-dependent RNA helicase sub2 (440 aa).

Over residues 1 to 16 (MSHEEDLIDYSDEELQ) the composition is skewed to acidic residues. Positions 1–42 (MSHEEDLIDYSDEELQTTDAAATTAAPASNGEAKKGDLTVSG) are disordered. Residues 17–28 (TTDAAATTAAPA) are compositionally biased toward low complexity. The Q motif signature appears at 57 to 85 (TGFRDFLLKEELLRAITDCGFEHPSEVQQ). In terms of domain architecture, Helicase ATP-binding spans 88–263 (IPTAILNVDV…KKFMRNPLEV (176 aa)). 101-108 (AKSGLGKT) is an ATP binding site. The DEAD box signature appears at 210–213 (DECD). Residues 291-436 (KLNELLDSLE…EYPEGGVDSS (146 aa)) form the Helicase C-terminal domain.

This sequence belongs to the DEAD box helicase family. DECD subfamily.

It is found in the nucleus. It carries out the reaction ATP + H2O = ADP + phosphate + H(+). Functionally, ATP-binding RNA helicase involved in transcription elongation and required for the export of mRNA out of the nucleus. SUB2 also plays a role in pre-mRNA splicing and spliceosome assembly. May be involved in rDNA and telomeric silencing, and maintenance of genome integrity. The chain is ATP-dependent RNA helicase sub2 (sub2) from Aspergillus niger (strain ATCC MYA-4892 / CBS 513.88 / FGSC A1513).